A 1034-amino-acid chain; its full sequence is Beta-galactosidase (1034 aa).

Positions 108 and 207 each coordinate substrate. Asp-207 is a Na(+) binding site. Residues Glu-423, His-425, and Glu-468 each contribute to the Mg(2+) site. Residues Glu-468 and 544 to 547 each bind substrate; that span reads EYAH. Glu-468 functions as the Proton donor in the catalytic mechanism. Glu-544 functions as the Nucleophile in the catalytic mechanism. Residue Asn-604 coordinates Mg(2+). Na(+)-binding residues include Phe-608 and Asn-611. Asn-611 and Trp-1010 together coordinate substrate.

The protein belongs to the glycosyl hydrolase 2 family. In terms of assembly, homotetramer. Mg(2+) serves as cofactor. Na(+) is required as a cofactor.

It catalyses the reaction Hydrolysis of terminal non-reducing beta-D-galactose residues in beta-D-galactosides.. In Klebsiella pneumoniae, this protein is Beta-galactosidase.